Here is a 73-residue protein sequence, read N- to C-terminus: Capsid protein G8P (73 aa).

The first 23 residues, 1–23, serve as a signal peptide directing secretion; it reads MKKSLVLKASVAVATLVPMLSFA. At 24-44 the chain is on the periplasmic side; it reads AEGDDPAKAAFDSLQASATEY. The chain crosses the membrane as a helical span at residues 45–65; the sequence is IGYAWAMVVVIVGATIGIKLF. At 66-73 the chain is on the cytoplasmic side; it reads KKFTSKAS.

This sequence belongs to the inovirus capsid protein family. As to quaternary structure, homomultimerizes. There are several thousands of this protein in the phage capsid.

It localises to the virion. It is found in the host membrane. Self assembles to form a helical capsid wrapping up the viral genomic DNA. The capsid displays a filamentous structure with a length of 760-1950 nm and a width of 6-8 nm. The virion assembly and budding take place at the host inner membrane. This is Capsid protein G8P (VIII) from Escherichia coli (Bacteriophage f1).